The chain runs to 120 residues: NAD(P)H-quinone oxidoreductase subunit 3, chloroplastic (120 aa).

Transmembrane regions (helical) follow at residues 9-29, 64-84, and 88-108; these read IFWA…LISG, MFAL…PWAM, and VLGV…ILGL.

The protein belongs to the complex I subunit 3 family. NDH is composed of at least 16 different subunits, 5 of which are encoded in the nucleus.

The protein localises to the plastid. Its subcellular location is the chloroplast thylakoid membrane. It catalyses the reaction a plastoquinone + NADH + (n+1) H(+)(in) = a plastoquinol + NAD(+) + n H(+)(out). The catalysed reaction is a plastoquinone + NADPH + (n+1) H(+)(in) = a plastoquinol + NADP(+) + n H(+)(out). Functionally, NDH shuttles electrons from NAD(P)H:plastoquinone, via FMN and iron-sulfur (Fe-S) centers, to quinones in the photosynthetic chain and possibly in a chloroplast respiratory chain. The immediate electron acceptor for the enzyme in this species is believed to be plastoquinone. Couples the redox reaction to proton translocation, and thus conserves the redox energy in a proton gradient. In Lobularia maritima (Sweet alyssum), this protein is NAD(P)H-quinone oxidoreductase subunit 3, chloroplastic.